We begin with the raw amino-acid sequence, 2325 residues long: MVPWRALSLPILLVSLRGYVCASSVLSETSESEFYENEQRRALLAVQFEATSPRYFFHEAINWGESKIKGSCPHECLNGAFCSKTGTCDCQIFQALGTRCQIVPNMGSGRDGICKTWGQYHFETFDGIYYYFPGSCSYIFAKDCGNLEPQYTVWVHNSPKCLGSVYSCYRSISLFFSNQEEIRIYGHEIRKNGISLSLPQTLGQVHLEKVADYILVKTTFGFSLAWDGISGIYLKLSEEHRGKSCGLCANYNGIQSDDFVILQEDYTEDIAMFANSWLVLTPDDTKCVPTPSDFPNPCSSGMPAFEAIFFKCQILLQFPFLSCHEYIDPYLYIASCVNDLCKTDDDETYCRAATEYARACSHAGFPIQDWRDDFPACTDKCDDSFVHRDCISCCPPSCTFEKQCLGSNLHCLDGCYCADGLIMDNGTCISLESCPCSFHGLAYSVGSKIEQECTECVCVGGVWNCTEHDCPVQCSVVGDSHFTTFDGRHYSFIGLCQYILVKGTGKDRFTITLQKAHCEQNLGLVCLQSITLILEDDFNKQVTLSRGGQIVTSPNQGFTLNGIVEIQTLSSLFILLRTTFGLKILFAIDGERIYIQLSSAWKRRTLGLCGTFNGNIRDDFLSPSGMIEGTPQLHAHAWRVSSTCFAPVHVPMVDPCNINQQNIGYAAHCDVIHQELFAPCHVYVSPGLYYQLCRHDACKCGSPCLCNALAHYAYLCGQRGVPIDFRAHISFCAVVCQKGMLYHHCSSLCLRSCTSLSSPEQCKDDCAEGCNCPEGKFYEETLNFCVPIYHCRCHYRGSIYQPGELIPTPSGLCQCSNGTVKCDELATPSTVHACPEGKEYFDCRFPDPALPAGGINCETTCANLAMNFTCAPSSPCISGCVCAAGMAEHKGKCYVPESCPCIWKDWEYSSGEVISTPCYTCVCRRGMFNCTYYPCPAVCTVYGDRHYHSFDGLEYDYISDCQVFLIKSTDDSDISVISQNKKCFDNDIVCSKSVLISIGDTEIYLNDAPYKQKRSGFFLESRPEYQLWKAGFYIVIYFPEEDITILWDEKTTIHIKVGPQWKNKLAGLCGNFDKCTSNDMTTSNNIEVRNAQVFGDSWALGQCEDLMEALKPCEAHQNKFPYAKRECSILYSDVFAPCRNVIDVTSFAKNCHEDTCNCNLGGDCECLCTSVAAYAYKCCQEGVPVHWRSPTVCALDCEYYNQGLGEGPYMLASYGQSGLVLGANMTSRSVFSLPRSNNRGNLFFIFMITPGLFKEKTSSLALVSLESAERPNYFLYVHDNDTLSLKLWRANSEFHQRATFFHHQGLWIPGYSAFELYSKKGYFIVFMGSSVKASKYDDSEEFKQSSSFSIEEIQAVVPYRRMCEWRYEPCATPCFKTCSDPEALACTFLPPVEGCLPYCPKNMILDETTLKCVHPEDCIPLFPTEPALPPDITPSDMTPTPGLECEPQQFDPVYNCSQYICLNMEWTFYNWSLNCPKDLEMPDCGFRGWPVQVNTDICCPEWECPCRCSMLSELSIITFDGNSAALSSMASYILVRVPGEIVVVHIDKCSMNQNGHALKKPASFGRISGLCFKKLNVTTSIHKILINRVVRKVDVDSIVVPLPFSSHELFIEDSGTMYVITTPAGLIIKWAHLTGIIDIHFGPQFNLSSYTEGLCGICNDNPDDDLRMQNGTIITNMEDIELFIGSWEIEKSFEVTMRRPVRNCTEYDCSHCIELLNREGFIPCHDKVSPRDFCEKMWINYTYFWSYECDAISAYVALCNKFDICIQWRTPDYCPLSCPEGKEYQPCVRPCEARTCLNKWFYGHSSCLNLREDCVCKNGTILHRPDKTLCIPEQECVCTDREEHPRSAGEIWNGGIDECTLYKCLEDGNIIPIEPVCEEEPSPICERTAEVVIGIVDKLTCCSKKVCGCDMSLCDRTIPPCTNSQKLIVGYSALSCCPQYECECDTVRCPDISTPVCRDDQFVLQVRQGEPCCFYPSCVCKTCTEPTPQCTDGEFLTVNINTTHLCCPQYYCVCEPDLCPPPSLECAKDMNLVKENVSGQCCPNWRCECNCETLVMPTCDVGEFAAIDQNFQTDCGCVQYLCEKDDVCVFQEVSVLNPGQSLIKYLEEEFCYIIECLDEKDNYTDFHTLNVTMVNCSKDCDAHQIYIPSSSDYDCCGTCKNISCKFIMENGTSVIYEEGSTWHYNCSTYECVNTEEGATILNYSMVCPPFNETECKLNEGIVKLYNEGCCKICKREERICQKVIIKSIIKKQDCVSQSSISVASCDGKCPSATIYNINVESHLRFCKCCRENGVRNVTVPLHCSGNGTEVMYTLQEPIDCTCQWN.

The first 22 residues, 1–22 (MVPWRALSLPILLVSLRGYVCA), serve as a signal peptide directing secretion. A VWFD 1 domain is found at 112–288 (GICKTWGQYH…VLTPDDTKCV (177 aa)). 2 disulfides stabilise this stretch: cysteine 114/cysteine 248 and cysteine 136/cysteine 287. Asparagine 425 carries an N-linked (GlcNAc...) asparagine glycan. The VWFD 2 domain occupies 472–645 (VQCSVVGDSH…HAWRVSSTCF (174 aa)). 3 cysteine pairs are disulfide-bonded: cysteine 474/cysteine 609, cysteine 496/cysteine 644, and cysteine 518/cysteine 526. In terms of domain architecture, TIL 1 spans 736 to 791 (CQKGMLYHHCSSLCLRSCTSLSSPEQCKDDCAEGCNCPEGKFYEETLNFCVPIYHC). Asparagine 817 and asparagine 867 each carry an N-linked (GlcNAc...) asparagine glycan. A VWFD 3 domain is found at 937–1114 (AVCTVYGDRH…DLMEALKPCE (178 aa)). 3 disulfides stabilise this stretch: cysteine 939-cysteine 1069, cysteine 961-cysteine 1113, and cysteine 983-cysteine 990. Residue asparagine 1280 is glycosylated (N-linked (GlcNAc...) asparagine). The TIL 2 domain maps to 1366–1418 (RYEPCATPCFKTCSDPEALACTFLPPVEGCLPYCPKNMILDETTLKCVHPEDC). The VWFD 4 domain occupies 1506–1695 (CRCSMLSELS…SWEIEKSFEV (190 aa)). 2 cysteine pairs are disulfide-bonded: cysteine 1508–cysteine 1655 and cysteine 1549–cysteine 1571. 2 N-linked (GlcNAc...) asparagine glycosylation sites follow: asparagine 1576 and asparagine 2170. Disulfide bonds link cysteine 2233–cysteine 2289, cysteine 2254–cysteine 2303, cysteine 2265–cysteine 2320, and cysteine 2269–cysteine 2322. Residues 2233–2325 (CKREERICQK…EPIDCTCQWN (93 aa)) enclose the CTCK domain. Asparagine 2296 carries N-linked (GlcNAc...) asparagine glycosylation.

The protein belongs to the otogelin family.

The protein localises to the secreted. In Mus musculus (Mouse), this protein is Otogelin-like protein (Otogl).